We begin with the raw amino-acid sequence, 392 residues long: Formate-dependent phosphoribosylglycinamide formyltransferase (392 aa).

N(1)-(5-phospho-beta-D-ribosyl)glycinamide is bound by residues 12–13 (EL) and Glu72. Residues Arg104, Lys145, 150–155 (SSGKGQ), 185–188 (EAFV), and Glu193 contribute to the ATP site. The ATP-grasp domain occupies 109-300 (DLAARDLGLR…EFELHARAVL (192 aa)). Glu258 and Glu270 together coordinate Mg(2+). N(1)-(5-phospho-beta-D-ribosyl)glycinamide contacts are provided by residues Asp277, Lys348, and 355–356 (RR).

The protein belongs to the PurK/PurT family. As to quaternary structure, homodimer.

The catalysed reaction is N(1)-(5-phospho-beta-D-ribosyl)glycinamide + formate + ATP = N(2)-formyl-N(1)-(5-phospho-beta-D-ribosyl)glycinamide + ADP + phosphate + H(+). The protein operates within purine metabolism; IMP biosynthesis via de novo pathway; N(2)-formyl-N(1)-(5-phospho-D-ribosyl)glycinamide from N(1)-(5-phospho-D-ribosyl)glycinamide (formate route): step 1/1. Functionally, involved in the de novo purine biosynthesis. Catalyzes the transfer of formate to 5-phospho-ribosyl-glycinamide (GAR), producing 5-phospho-ribosyl-N-formylglycinamide (FGAR). Formate is provided by PurU via hydrolysis of 10-formyl-tetrahydrofolate. The protein is Formate-dependent phosphoribosylglycinamide formyltransferase of Chlorobaculum tepidum (strain ATCC 49652 / DSM 12025 / NBRC 103806 / TLS) (Chlorobium tepidum).